Consider the following 117-residue polypeptide: uncharacterized protein (117 aa).

The protein localises to the plastid. It localises to the chloroplast. This is an uncharacterized protein from Chlamydomonas reinhardtii (Chlamydomonas smithii).